The sequence spans 188 residues: dCTP deaminase (188 aa).

DCTP contacts are provided by residues 111 to 116 (KSTYAR), 135 to 137 (TLE), Gln156, Tyr170, and Gln180. Residue Glu137 is the Proton donor/acceptor of the active site.

This sequence belongs to the dCTP deaminase family. Homotrimer.

The enzyme catalyses dCTP + H2O + H(+) = dUTP + NH4(+). It functions in the pathway pyrimidine metabolism; dUMP biosynthesis; dUMP from dCTP (dUTP route): step 1/2. Its function is as follows. Catalyzes the deamination of dCTP to dUTP. The sequence is that of dCTP deaminase from Cupriavidus metallidurans (strain ATCC 43123 / DSM 2839 / NBRC 102507 / CH34) (Ralstonia metallidurans).